The primary structure comprises 43 residues: Protein PsbN (43 aa).

Residues 4-24 (ATVLSITFAVILIAITGLAVY) traverse the membrane as a helical segment.

The protein belongs to the PsbN family.

The protein localises to the cellular thylakoid membrane. Its function is as follows. May play a role in photosystem I and II biogenesis. This is Protein PsbN from Synechocystis sp. (strain ATCC 27184 / PCC 6803 / Kazusa).